Here is a 189-residue protein sequence, read N- to C-terminus: Crossover junction endodeoxyribonuclease RuvC (189 aa).

Active-site residues include D7, E68, and D141. Mg(2+) is bound by residues D7, E68, and D141.

Belongs to the RuvC family. As to quaternary structure, homodimer which binds Holliday junction (HJ) DNA. The HJ becomes 2-fold symmetrical on binding to RuvC with unstacked arms; it has a different conformation from HJ DNA in complex with RuvA. In the full resolvosome a probable DNA-RuvA(4)-RuvB(12)-RuvC(2) complex forms which resolves the HJ. Mg(2+) serves as cofactor.

Its subcellular location is the cytoplasm. It catalyses the reaction Endonucleolytic cleavage at a junction such as a reciprocal single-stranded crossover between two homologous DNA duplexes (Holliday junction).. In terms of biological role, the RuvA-RuvB-RuvC complex processes Holliday junction (HJ) DNA during genetic recombination and DNA repair. Endonuclease that resolves HJ intermediates. Cleaves cruciform DNA by making single-stranded nicks across the HJ at symmetrical positions within the homologous arms, yielding a 5'-phosphate and a 3'-hydroxyl group; requires a central core of homology in the junction. The consensus cleavage sequence is 5'-(A/T)TT(C/G)-3'. Cleavage occurs on the 3'-side of the TT dinucleotide at the point of strand exchange. HJ branch migration catalyzed by RuvA-RuvB allows RuvC to scan DNA until it finds its consensus sequence, where it cleaves and resolves the cruciform DNA. The protein is Crossover junction endodeoxyribonuclease RuvC of Rhodococcus opacus (strain B4).